A 334-amino-acid polypeptide reads, in one-letter code: Phosphate acyltransferase (334 aa).

It belongs to the PlsX family. As to quaternary structure, homodimer. Probably interacts with PlsY.

The protein resides in the cytoplasm. The enzyme catalyses a fatty acyl-[ACP] + phosphate = an acyl phosphate + holo-[ACP]. It participates in lipid metabolism; phospholipid metabolism. In terms of biological role, catalyzes the reversible formation of acyl-phosphate (acyl-PO(4)) from acyl-[acyl-carrier-protein] (acyl-ACP). This enzyme utilizes acyl-ACP as fatty acyl donor, but not acyl-CoA. In Clostridium tetani (strain Massachusetts / E88), this protein is Phosphate acyltransferase.